Here is a 310-residue protein sequence, read N- to C-terminus: Forkhead box protein pes-1 (310 aa).

Residues 1–16 (MLPLSISTSPDPASQF) are compositionally biased toward polar residues. Disordered regions lie at residues 1-37 (MLPL…GTAK), 58-77 (VSPS…SPAP), 92-126 (KQSS…SNPN), and 217-242 (SLRR…PNPI). Residues 17-35 (PTVPDLPTLTPTPSPTSGT) are compositionally biased toward low complexity. The fork-head DNA-binding region spans 128–220 (RPAYSYNALI…IGKDCGSLRR (93 aa)). A compositionally biased stretch (basic residues) spans 218–231 (LRRKKNGKPRKYSK).

It localises to the nucleus. Its subcellular location is the cytoplasm. Functionally, transcription factor. Plays a role in embryogenesis and later development, perhaps acting redundantly with forkhead protein fkh-2. In Caenorhabditis briggsae, this protein is Forkhead box protein pes-1.